A 65-amino-acid chain; its full sequence is Large ribosomal subunit protein bL31 (65 aa).

Zn(2+)-binding residues include Cys16, Cys18, Cys36, and Cys39.

Belongs to the bacterial ribosomal protein bL31 family. Type A subfamily. In terms of assembly, part of the 50S ribosomal subunit. Requires Zn(2+) as cofactor.

Binds the 23S rRNA. This chain is Large ribosomal subunit protein bL31, found in Alkaliphilus metalliredigens (strain QYMF).